Reading from the N-terminus, the 422-residue chain is Exodeoxyribonuclease 7 large subunit (422 aa).

This sequence belongs to the XseA family. As to quaternary structure, heterooligomer composed of large and small subunits.

It localises to the cytoplasm. It catalyses the reaction Exonucleolytic cleavage in either 5'- to 3'- or 3'- to 5'-direction to yield nucleoside 5'-phosphates.. Functionally, bidirectionally degrades single-stranded DNA into large acid-insoluble oligonucleotides, which are then degraded further into small acid-soluble oligonucleotides. This chain is Exodeoxyribonuclease 7 large subunit, found in Leptospira interrogans serogroup Icterohaemorrhagiae serovar copenhageni (strain Fiocruz L1-130).